Here is a 268-residue protein sequence, read N- to C-terminus: 4-diphosphocytidyl-2-C-methyl-D-erythritol kinase (268 aa).

The active site involves lysine 10. 101–111 is a binding site for ATP; sequence PTQAGLGGGST. The active site involves aspartate 143.

The protein belongs to the GHMP kinase family. IspE subfamily.

The enzyme catalyses 4-CDP-2-C-methyl-D-erythritol + ATP = 4-CDP-2-C-methyl-D-erythritol 2-phosphate + ADP + H(+). It participates in isoprenoid biosynthesis; isopentenyl diphosphate biosynthesis via DXP pathway; isopentenyl diphosphate from 1-deoxy-D-xylulose 5-phosphate: step 3/6. Its function is as follows. Catalyzes the phosphorylation of the position 2 hydroxy group of 4-diphosphocytidyl-2C-methyl-D-erythritol. The protein is 4-diphosphocytidyl-2-C-methyl-D-erythritol kinase of Helicobacter acinonychis (strain Sheeba).